The sequence spans 459 residues: Glycosyl hydrolase family 109 protein (459 aa).

The segment at residues 1-31 is a signal peptide (tat-type signal); sequence MHNIHRRNFLKAAGAATAGLVTANIALNAYA. NAD(+)-binding positions include 64-65, Asp-86, 135-138, 155-156, and Asn-184; these read ER, WEWH, and EV. Substrate contacts are provided by residues Tyr-213, Arg-232, 244-247, and Tyr-326; that span reads YPTH. Tyr-244 serves as a coordination point for NAD(+).

Belongs to the Gfo/Idh/MocA family. Glycosyl hydrolase 109 subfamily. The cofactor is NAD(+). In terms of processing, predicted to be exported by the Tat system. The position of the signal peptide cleavage has not been experimentally proven.

Functionally, glycosidase. This chain is Glycosyl hydrolase family 109 protein, found in Shewanella baltica (strain OS155 / ATCC BAA-1091).